A 911-amino-acid chain; its full sequence is Protein argonaute 4B (911 aa).

Disordered regions lie at residues Met-1 to Leu-51 and Lys-149 to Arg-171. Positions Pro-281–Pro-396 constitute a PAZ domain. A Piwi domain is found at Phe-565–Lys-872.

Belongs to the argonaute family. Ago subfamily.

In terms of biological role, probably involved in the RNA silencing pathway. May bind to short RNAs such as microRNAs (miRNAs) or short interfering RNAs (siRNAs), and represses the translation of mRNAs which are complementary to them. This chain is Protein argonaute 4B (AGO4B), found in Oryza sativa subsp. japonica (Rice).